Here is a 478-residue protein sequence, read N- to C-terminus: 3-ketoacyl-CoA synthase 3 (478 aa).

An N-terminal signal peptide occupies residues 1 to 25; the sequence is MDLLVMLLSLLVSYLIFKIWKRIDS. The FAE domain maps to 26–313; that stretch reads KRDQNCYILD…FMLCLLLKKL (288 aa). Residues C168, H247, H345, H349, H378, and N382 contribute to the active site.

The protein belongs to the thiolase-like superfamily. Chalcone/stilbene synthases family. As to expression, expressed in siliques, leaves, stems and seedlings.

It is found in the endoplasmic reticulum. It carries out the reaction a very-long-chain acyl-CoA + malonyl-CoA + H(+) = a very-long-chain 3-oxoacyl-CoA + CO2 + CoA. The protein operates within lipid metabolism; fatty acid biosynthesis. The polypeptide is 3-ketoacyl-CoA synthase 3 (Arabidopsis thaliana (Mouse-ear cress)).